The chain runs to 658 residues: Ubiquilin-3 (658 aa).

A Ubiquitin-like domain is found at 22 to 96; sequence IRVTVKTPKD…VHLVIKMQRR (75 aa). The 40-residue stretch at 194-233 folds into the STI1 domain; it reads NPHMQHLIQQNPEIGHILNNPEIMRQTMEFLRNPSMMQEM. Residues 280–291 are compositionally biased toward low complexity; it reads TATTASTTTTSS. 2 disordered regions span residues 280 to 336 and 362 to 478; these read TATT…RNRL and YLQG…PESP. Residues 312–323 are compositionally biased toward gly residues; it reads VSGGRQGRGGRQ. Polar residues-rich tracts occupy residues 362–379, 389–400, and 438–469; these read YLQGTVPTSNPSQESPLS, SSPKSGSGQSLP, and TGPSTSLPNLTSQIGDSANRSSFVSTPSSLMS. One can recognise a UBA domain in the interval 614 to 658; the sequence is QLEAHFRVQLEQLRAMGFLNLEANLQALIATEGDVDAAVEKLRKS.

Testis-specific (at protein level).

The chain is Ubiquilin-3 (Ubqln3) from Mus musculus (Mouse).